A 925-amino-acid chain; its full sequence is Bifunctional uridylyltransferase/uridylyl-removing enzyme (925 aa).

A uridylyltransferase region spans residues 1–382 (MVLPTTKDAT…PPGAEVRRVP (382 aa)). The segment at 383–738 (DSDDFIIDNN…VGFDEARGVT (356 aa)) is uridylyl-removing. Residues 498–621 (VDEHLIRCIG…VQSVERMKLL (124 aa)) form the HD domain. ACT domains are found at residues 739–820 (ELTI…DVMP) and 849–925 (MIEV…NTAE).

Belongs to the GlnD family. Mg(2+) serves as cofactor.

The enzyme catalyses [protein-PII]-L-tyrosine + UTP = [protein-PII]-uridylyl-L-tyrosine + diphosphate. It catalyses the reaction [protein-PII]-uridylyl-L-tyrosine + H2O = [protein-PII]-L-tyrosine + UMP + H(+). Its activity is regulated as follows. Uridylyltransferase (UTase) activity is inhibited by glutamine, while glutamine activates uridylyl-removing (UR) activity. Modifies, by uridylylation and deuridylylation, the PII regulatory proteins (GlnB and homologs), in response to the nitrogen status of the cell that GlnD senses through the glutamine level. Under low glutamine levels, catalyzes the conversion of the PII proteins and UTP to PII-UMP and PPi, while under higher glutamine levels, GlnD hydrolyzes PII-UMP to PII and UMP (deuridylylation). Thus, controls uridylylation state and activity of the PII proteins, and plays an important role in the regulation of nitrogen assimilation and metabolism. The polypeptide is Bifunctional uridylyltransferase/uridylyl-removing enzyme (Nitrobacter winogradskyi (strain ATCC 25391 / DSM 10237 / CIP 104748 / NCIMB 11846 / Nb-255)).